Consider the following 235-residue polypeptide: 2-C-methyl-D-erythritol 4-phosphate cytidylyltransferase (235 aa).

Belongs to the IspD/TarI cytidylyltransferase family. IspD subfamily.

It carries out the reaction 2-C-methyl-D-erythritol 4-phosphate + CTP + H(+) = 4-CDP-2-C-methyl-D-erythritol + diphosphate. It functions in the pathway isoprenoid biosynthesis; isopentenyl diphosphate biosynthesis via DXP pathway; isopentenyl diphosphate from 1-deoxy-D-xylulose 5-phosphate: step 2/6. Catalyzes the formation of 4-diphosphocytidyl-2-C-methyl-D-erythritol from CTP and 2-C-methyl-D-erythritol 4-phosphate (MEP). This Pseudomonas putida (strain W619) protein is 2-C-methyl-D-erythritol 4-phosphate cytidylyltransferase.